Reading from the N-terminus, the 209-residue chain is NAD(P)H-quinone oxidoreductase subunit N, chloroplastic (209 aa).

A chloroplast-targeting transit peptide spans methionine 1–lysine 45.

This sequence belongs to the NDH complex subunit N family. Part of the chloroplast NDH complex, composed of a mixture of chloroplast and nucleus encoded subunits. Component of the NDH subcomplex A, at least composed of ndhH, ndhI, ndhJ, ndhK, ndhL, ndhM, ndhN and ndhO.

It localises to the plastid. It is found in the chloroplast thylakoid membrane. The catalysed reaction is a plastoquinone + NADH + (n+1) H(+)(in) = a plastoquinol + NAD(+) + n H(+)(out). The enzyme catalyses a plastoquinone + NADPH + (n+1) H(+)(in) = a plastoquinol + NADP(+) + n H(+)(out). NDH shuttles electrons from NAD(P)H:plastoquinone, via FMN and iron-sulfur (Fe-S) centers, to quinones in the photosynthetic chain and possibly in a chloroplast respiratory chain. The immediate electron acceptor for the enzyme in this species is believed to be plastoquinone. Couples the redox reaction to proton translocation, and thus conserves the redox energy in a proton gradient. The protein is NAD(P)H-quinone oxidoreductase subunit N, chloroplastic of Arabidopsis thaliana (Mouse-ear cress).